Here is a 556-residue protein sequence, read N- to C-terminus: MSVSAFNRRWAAVILEALTRHGVRHICIAPGSRSTPLTLAAAENSAFIHHTHFDERGLGHLALGLAKVSKQPVAVIVTSGTAVANLYPALIEAGLTGEKLILLTADRPPELIDCGANQAIRQPGMFASHPTHSISLPRPTQDIPARWLVSTIDHALGTLHSGGVHINCPFAEPLYGEMDDTGLSWQQRLGDWWQDDKPWLREAPRLESEKQRDWFFWRQKRGVVVAGRMSAEEGKKVALWAQTLGWPLIGDVLSQTGQPLPCADLWLGNAKATSELQQAQIVVQLGSSLTGKRLLQWQASCEPEEYWIVDDIEGRLDPAHHRGRRLIANIADWLELHPAEKRQPWCVEIPRLAEQAMQAVIARRDAFGEAQLAHRISDYLPEQGQLFVGNSLVVRLIDALSQLPAGYPVYSNRGASGIDGLLSTAAGVQRASGKPTLAIVGDLSALYDLNALALLRQVSAPLILIVVNNNGGQIFSLLPTPKSERERFYLMPQNVHFEHAAAMFELKYHRPQNWQELETALADAWRTPTTTVIEMVVNDTDGAQTLQQLLAQVSHL.

This sequence belongs to the TPP enzyme family. MenD subfamily. In terms of assembly, homodimer. Requires Mg(2+) as cofactor. The cofactor is Mn(2+). Thiamine diphosphate is required as a cofactor.

It carries out the reaction isochorismate + 2-oxoglutarate + H(+) = 5-enolpyruvoyl-6-hydroxy-2-succinyl-cyclohex-3-ene-1-carboxylate + CO2. Its pathway is quinol/quinone metabolism; 1,4-dihydroxy-2-naphthoate biosynthesis; 1,4-dihydroxy-2-naphthoate from chorismate: step 2/7. It participates in quinol/quinone metabolism; menaquinone biosynthesis. In terms of biological role, catalyzes the thiamine diphosphate-dependent decarboxylation of 2-oxoglutarate and the subsequent addition of the resulting succinic semialdehyde-thiamine pyrophosphate anion to isochorismate to yield 2-succinyl-5-enolpyruvyl-6-hydroxy-3-cyclohexene-1-carboxylate (SEPHCHC). The sequence is that of 2-succinyl-5-enolpyruvyl-6-hydroxy-3-cyclohexene-1-carboxylate synthase from Shigella sonnei (strain Ss046).